Here is a 423-residue protein sequence, read N- to C-terminus: Lipase member M (423 aa).

The first 33 residues, 1 to 33, serve as a signal peptide directing secretion; it reads MLETLSRQWIVSHRMEMWLLILVAYMFQRNVNS. Asn-48 carries N-linked (GlcNAc...) asparagine glycosylation. In terms of domain architecture, AB hydrolase-1 spans 92–392; sequence PVVLLQHGLV…EWAHVDFIWG (301 aa). The Nucleophile role is filled by Ser-186. Cys-260 and Cys-269 are disulfide-bonded. Active-site charge relay system residues include Asp-357 and His-386.

It belongs to the AB hydrolase superfamily. Lipase family. In terms of tissue distribution, exclusively expressed in the epidermis within the granular keratinocytes.

It localises to the secreted. Its function is as follows. Plays a highly specific role in the last step of keratinocyte differentiation. May have an essential function in lipid metabolism of the most differentiated epidermal layers. The protein is Lipase member M (LIPM) of Homo sapiens (Human).